The primary structure comprises 275 residues: 3-methyl-2-oxobutanoate hydroxymethyltransferase (275 aa).

Residues Asp49 and Asp88 each coordinate Mg(2+). Residues 49 to 50 (DS), Asp88, and Lys118 each bind 3-methyl-2-oxobutanoate. Glu120 provides a ligand contact to Mg(2+). Glu187 (proton acceptor) is an active-site residue.

Belongs to the PanB family. As to quaternary structure, homodecamer; pentamer of dimers. Requires Mg(2+) as cofactor.

The protein localises to the cytoplasm. The catalysed reaction is 3-methyl-2-oxobutanoate + (6R)-5,10-methylene-5,6,7,8-tetrahydrofolate + H2O = 2-dehydropantoate + (6S)-5,6,7,8-tetrahydrofolate. The protein operates within cofactor biosynthesis; (R)-pantothenate biosynthesis; (R)-pantoate from 3-methyl-2-oxobutanoate: step 1/2. In terms of biological role, catalyzes the reversible reaction in which hydroxymethyl group from 5,10-methylenetetrahydrofolate is transferred onto alpha-ketoisovalerate to form ketopantoate. This chain is 3-methyl-2-oxobutanoate hydroxymethyltransferase, found in Nitrobacter hamburgensis (strain DSM 10229 / NCIMB 13809 / X14).